Here is a 576-residue protein sequence, read N- to C-terminus: Interleukin-1 receptor type 1 (576 aa).

An N-terminal signal peptide occupies residues 1–19 (MENMKVLLGFICLIVPLLS). Ig-like C2-type domains follow at residues 20 to 115 (LETD…ITMS), 121 to 217 (PGLC…RVIT), and 229 to 331 (PVIM…VRLV). Over 20-338 (LETDKCTEYP…RLVYPVPDFK (319 aa)) the chain is Extracellular. Cystine bridges form between Cys25/Cys107, Cys46/Cys99, and Cys145/Cys199. N-linked (GlcNAc...) asparagine glycans are attached at residues Asn63 and Asn103. 3 N-linked (GlcNAc...) asparagine glycosylation sites follow: Asn236, Asn252, and Asn266. Residues Cys251 and Cys315 are joined by a disulfide bond. Residues 339 to 359 (NYLIGGFAIFTATAVFCACIY) traverse the membrane as a helical segment. Over 360-576 (KVFKVDIVLW…LQAETHLPLG (217 aa)) the chain is Cytoplasmic. The TIR domain maps to 386-541 (RTYDAYVLYP…RFWKNLRYQM (156 aa)). Residue Glu473 is part of the active site. Tyr499 carries the phosphotyrosine modification. At Thr556 the chain carries Phosphothreonine; by PKC.

This sequence belongs to the interleukin-1 receptor family. As to quaternary structure, the interleukin-1 receptor complex is a heterodimer of IL1R1 and IL1RAP. Interacts with PIK3R1. Interacts with IL1A. A soluble form (sIL1R1) is probably produced by proteolytic cleavage at the cell surface (shedding). Post-translationally, rapidly phosphorylated on Tyr-499 in response to IL-1, which creates a SH2 binding site for the PI 3-kinase regulatory subunit PIK3R1.

The protein localises to the membrane. Its subcellular location is the cell membrane. It is found in the secreted. The enzyme catalyses NAD(+) + H2O = ADP-D-ribose + nicotinamide + H(+). In terms of biological role, receptor for IL1A, IL1B and IL1RN. After binding to interleukin-1 associates with the coreceptor IL1RAP to form the high affinity interleukin-1 receptor complex which mediates interleukin-1-dependent activation of NF-kappa-B, MAPK and other pathways. Signaling involves the recruitment of adapter molecules such as TOLLIP, MYD88, and IRAK1 or IRAK2 via the respective TIR domains of the receptor/coreceptor subunits. Binds ligands with comparable affinity and binding of antagonist IL1RN prevents association with IL1RAP to form a signaling complex. Involved in IL1B-mediated costimulation of IFNG production from T-helper 1 (Th1) cells. The protein is Interleukin-1 receptor type 1 (Il1r1) of Rattus norvegicus (Rat).